The chain runs to 1044 residues: Unconventional myosin-Ic (1044 aa).

One can recognise a Myosin motor domain in the interval 28 to 712; it reads GVQDFVLLEN…TLFATEDSLE (685 aa). Residues asparagine 69, tyrosine 77, 120 to 129, and 173 to 177 contribute to the ATP site; these read SGESGAGKTE and NDNSS. Residue lysine 364 is modified to N6-methyllysine. Residue serine 389 is modified to Phosphoserine. The residue at position 467 (lysine 467) is an N6-acetyllysine. The residue at position 517 (serine 517) is a Phosphoserine. Residues 589–611 are actin-binding; sequence LLQLVEILRSKEPAYIRCIKPND. IQ domains follow at residues 715 to 744 and 738 to 767; these read RQSL…SAIC and VKRS…AAQT. Residues serine 845 and serine 1022 each carry the phosphoserine modification. A TH1 domain is found at 866 to 1040; the sequence is KDNYPQSVPR…NGHLAVVAPR (175 aa).

The protein belongs to the TRAFAC class myosin-kinesin ATPase superfamily. Myosin family. As to quaternary structure, interacts (via its IQ motifs) with CABP1 and CIB1; the interaction with CABP1 and CIB1 is calcium-dependent. Interacts (via tail domain) with PLEKHB1 (via PH domain); the interaction is not affected by the presence or absence of calcium and CALM. Interacts with POLR1A. Interacts with POLR2A. Component of the B-WICH complex, at least composed of SMARCA5/SNF2H, BAZ1B/WSTF, SF3B1, DEK, MYO1C, ERCC6, MYBBP1A and DDX21. Interacts (via its IQ motifs) with CALM; this precludes interaction with YWHAB. Interacts with YWHAB; this precludes interaction with CALM. Interacts with RPS6. Interacts with actin. Interacts with LLPH. Interacts with GLUT4. Interacts (via its IQ motifs) with SH3BGRL3; the interaction is dependent on calcium and takes place at membrane ruffles.

It localises to the cytoplasm. The protein resides in the nucleus. The protein localises to the cell cortex. Its subcellular location is the cell projection. It is found in the stereocilium membrane. It localises to the cytoplasmic vesicle. The protein resides in the ruffle membrane. In terms of biological role, myosins are actin-based motor molecules with ATPase activity. Unconventional myosins serve in intracellular movements. Their highly divergent tails are presumed to bind to membranous compartments, which would be moved relative to actin filaments. Involved in glucose transporter recycling in response to insulin by regulating movement of intracellular GLUT4-containing vesicles to the plasma membrane. Component of the hair cell's (the sensory cells of the inner ear) adaptation-motor complex. Acts as a mediator of adaptation of mechanoelectrical transduction in stereocilia of vestibular hair cells. Binds phosphoinositides and links the actin cytoskeleton to cellular membranes. This is Unconventional myosin-Ic (Myo1c) from Rattus norvegicus (Rat).